The following is a 532-amino-acid chain: FAD-dependent monooxygenase hkm7 (532 aa).

Residues 191-193 (RIY) and D261 contribute to the FAD site.

The protein belongs to the PheA/TfdB FAD monooxygenase family.

The protein operates within secondary metabolite biosynthesis. FAD-dependent monooxygenase; part of the gene cluster that mediates the biosynthesis of hancockiamides, an unusual new family of N-cinnamoylated piperazines. The NRPS hkm10 and the NmrA-like reductase hkm9 are proposed to convert two molecules of L-Phe to the intermediary piperazine called xenocockiamide A. Xenocockiamide A is then converted to hancockiamide D via a series of hydroxylations and O-methylations. The tyrosinase hkm6 may catalyze an aromatic hydroxylation, then the 2-oxoglutarate-dependent Fe(II) dioxygenase hkm4 and the FAD-dependent phenol hydroxylase hkm7 may catalyze consecutive hydroxylations to install 2 more hydroxy groups, and the methyltransferase hkm8 probably catalyzes two methylations using 2 molecules of S-adenosyl-L-methionine (SAM). The NRPS hkm11 activates and transfers trans-cinnamate supplied by the PAL hkm12 to hancockiamide D and produces hancockiamide A. NRPS Hkm11 has the flexibility to tolerate the bulky hancockiamide G as a substrate and the absence of the acetyl-transferase hkm3 opens up the opportunity for hkm11 to introduce a second N-cinnamoyl moiety. The cytochrome P450 monooxygenase hkm5 catalyzes the methylenedioxy bridge formation, converting hancockiamide A into hancockiamide G. Hkm5 can also convert hancockiamide B into hancockiamide C, and hancockiamide D into hancockiamide H. The N-acetyltransferase hkm3 finally transfers an acetyl group to 1-N of piperazine, converting hancockiamide A into hancockiamide B and hancockiamide G into hancockiamide C. This chain is FAD-dependent monooxygenase hkm7, found in Aspergillus hancockii.